A 115-amino-acid polypeptide reads, in one-letter code: NADH-ubiquinone oxidoreductase chain 3 (115 aa).

The next 3 membrane-spanning stretches (helical) occupy residues 3–23 (LYTV…VAFW), 55–75 (FFLV…LLPL), and 86–106 (TMMI…AYEW).

This sequence belongs to the complex I subunit 3 family. In terms of assembly, core subunit of respiratory chain NADH dehydrogenase (Complex I) which is composed of 45 different subunits. Interacts with TMEM186. Interacts with TMEM242.

Its subcellular location is the mitochondrion inner membrane. It carries out the reaction a ubiquinone + NADH + 5 H(+)(in) = a ubiquinol + NAD(+) + 4 H(+)(out). Its function is as follows. Core subunit of the mitochondrial membrane respiratory chain NADH dehydrogenase (Complex I) which catalyzes electron transfer from NADH through the respiratory chain, using ubiquinone as an electron acceptor. Essential for the catalytic activity of complex I. This is NADH-ubiquinone oxidoreductase chain 3 from Mus musculus (Mouse).